A 353-amino-acid chain; its full sequence is Glucose import ATP-binding protein GlcV (353 aa).

Residues 4-241 (IIVKNVSKVF…PVSIQVASLI (238 aa)) form the ABC transporter domain. ATP is bound by residues 40–46 (SGAGKTT), Gln-89, and Glu-166.

The protein belongs to the ABC transporter superfamily. In terms of assembly, the complex is composed of two ATP-binding proteins (GlcV), two transmembrane proteins (GlcT and GlcU) and a solute-binding protein (GlcS). Forms transient head-to-tail homodimers in the presence of ATP-Mg(2+).

Its subcellular location is the cell membrane. The enzyme catalyses D-glucose(out) + ATP + H2O = D-glucose(in) + ADP + phosphate + H(+). In terms of biological role, part of the ABC transporter complex GlcSTUV involved in glucose uptake. Responsible for energy coupling to the transport system. In vitro, as a free subunit, exhibits a constitutive ATPase activity. The polypeptide is Glucose import ATP-binding protein GlcV (Saccharolobus solfataricus (strain ATCC 35092 / DSM 1617 / JCM 11322 / P2) (Sulfolobus solfataricus)).